The sequence spans 1067 residues: UPF0507 protein KLLA0D01133g (1067 aa).

The VPS9 domain maps to 280–432 (IVEDQELEHR…FHQDTVDSLT (153 aa)).

The protein belongs to the UPF0507 family.

The polypeptide is UPF0507 protein KLLA0D01133g (Kluyveromyces lactis (strain ATCC 8585 / CBS 2359 / DSM 70799 / NBRC 1267 / NRRL Y-1140 / WM37) (Yeast)).